The following is a 681-amino-acid chain: Kojibiose hydrolase (681 aa).

Residues 1–23 (MKKYIFNHVFFFLMLCGSNYLYS) form the signal peptide. Residues R74, W343, D344, W391, E392, T407, E472, W473, K538, Q539, and D573 each contribute to the beta-D-glucose site. E472 acts as the Proton donor in catalysis. Catalysis depends on E616, which acts as the Proton acceptor.

It belongs to the glycosyl hydrolase 65 family. As to quaternary structure, homohexamer; dimer of trimers.

The protein resides in the periplasm. The catalysed reaction is kojibiose + H2O = beta-D-glucose + D-glucose. Glycosidase that specifically hydrolyzes kojibiose to beta-glucose and glucose. Also hydrolyzes, with lower catalytic efficiency, longer kojioligosaccharides (from kojitriose to kojipentaose) and shorter oligosaccharides produced by the degradation of dextran-containing alpha-1,2 branches. Probably acts on alpha-(1-&gt;2)-glucosyl isomaltooligosaccharides. Shows weak activity with nigerose but has no activity toward p-nitrophenyl alpha-glucopyranoside, which is a general substrate of exo-acting alpha-glucoside hydrolases. Has a strict specificity for alpha-1,2-glucosidic linkages. Catalyzes the hydrolytic reaction via an anomer-inverting mechanism. The polypeptide is Kojibiose hydrolase (Flavobacterium johnsoniae (strain ATCC 17061 / DSM 2064 / JCM 8514 / BCRC 14874 / CCUG 350202 / NBRC 14942 / NCIMB 11054 / UW101) (Cytophaga johnsonae)).